The chain runs to 366 residues: tRNA/tmRNA (uracil-C(5))-methyltransferase (366 aa).

Glutamine 190, tyrosine 218, asparagine 223, glutamate 239, and aspartate 299 together coordinate S-adenosyl-L-methionine. Catalysis depends on cysteine 324, which acts as the Nucleophile. The active-site Proton acceptor is glutamate 358.

The protein belongs to the class I-like SAM-binding methyltransferase superfamily. RNA M5U methyltransferase family. TrmA subfamily.

The enzyme catalyses uridine(54) in tRNA + S-adenosyl-L-methionine = 5-methyluridine(54) in tRNA + S-adenosyl-L-homocysteine + H(+). It carries out the reaction uridine(341) in tmRNA + S-adenosyl-L-methionine = 5-methyluridine(341) in tmRNA + S-adenosyl-L-homocysteine + H(+). Dual-specificity methyltransferase that catalyzes the formation of 5-methyluridine at position 54 (m5U54) in all tRNAs, and that of position 341 (m5U341) in tmRNA (transfer-mRNA). In Klebsiella pneumoniae subsp. pneumoniae (strain ATCC 700721 / MGH 78578), this protein is tRNA/tmRNA (uracil-C(5))-methyltransferase.